A 1222-amino-acid polypeptide reads, in one-letter code: MLFNINEKGEPLVISFAPFLSPEAIKHLQENERCSDQSQKRTAQQIEAIYTSGQNILVSASAGSGKTFVMVERILDKILRGVSIDRLFISTFTVKAATELRERIENKLYSQIAQTTDFQMKVYLTEQLQSLGQADIGTMDAFAQKVVSRYGYSIGISSQFRIMQDKAEQDVLKQEVFSKLFSEFMNQKEAPVFRALVKNFSGNCKDTSAFRELVYTCYSFSQSTENPKIWLQENFLSAAKTYQRLEDIPDHDIELLLLAMQDTANQLRDVTDMEDYGQLTKAGSRSAKYTKHLTIIEKLSDWVRDFKCLYGKAGLDRLIRDVTGLIPSGNDVTVSKVKYPVFKTLHQKLKQFRHLETILMYQKDCFPLLEQLQDFVLAFSEAYLAVKIQESAFEFSDITHFAIKILEENTDIRQSYQQHYHEVMVDEYQDNNHMQERLLTLLSNGHNRFMVGDIKQSIYRFRQADPQIFNQKFRDYQKKPEQGKVILLKENFRSQSEVLNVSNAVFSHLMDESVGDVLYDEQHQLIAGSHAQTVPYLDRRAQLLLYNSDKDDGNAPSDSEGISFSEVTIVAKEIIKLHNDKGVPFEDITLLVSSRTRNDIISHTFNQYSIPIVTDGGQQNYLKSVEVMVMLDTLRTINNPRNDYALVALLRSPMFAFDEDDLARIALQKDNELDKDCLYDKIQRAVIGRGAHPELIHDTLLGKLNIFLKTLKSWRRYAKLGSLYDLIWKIFNDRFYFDFVASQAKAEQAQANLYALALRANQFEKSGYKGLYRFIKMIDKVLETQNDLADVEVAAPKQAVNLMTIHKSKGLQFPYVFILNCDKRFSMTDIHKSFILNRQHGIGIKYLADIKGLLGETTLNSVKVSMETLPYQLNKQELRLATLSEQMRLLYVAMTRAEKKVYFIGKASKSKSQDITDPKKLGKLLPLALREQLLTFQDWLLAIADIFSTEDLYFDVRFIEDSDLTQESVGRLQTPQLLNPDDLKDNRQSETIARALDMLEAVSQLNANYEAAIHLPTVRTPSQLKAAYEPLLEPIGVDIIEKSSRSLSDFTLPHFSKKVKVEASHIGSALHQLMQVLPLSKPINQQTLLDALREIDSNEEVKTALDLKKIESFFCDTSLGQFFQTYQKHLYREAPFAILKVDPISQEEYVLRGIIDAYFLFDDHIVLVDYKTDKYKQPIELKKRYQQQLELYAEALTQTYKLPVTKRYLVLMGGGKPEIVEV.

Residues 39-495 enclose the UvrD-like helicase ATP-binding domain; sequence QKRTAQQIEA…ILLKENFRSQ (457 aa). 60-67 is a binding site for ATP; sequence ASAGSGKT. Positions 524 to 810 constitute a UvrD-like helicase C-terminal domain; it reads QLIAGSHAQT…NLMTIHKSKG (287 aa).

It belongs to the helicase family. AddA subfamily. As to quaternary structure, heterodimer of AddA and AddB/RexB. It depends on Mg(2+) as a cofactor.

The enzyme catalyses Couples ATP hydrolysis with the unwinding of duplex DNA by translocating in the 3'-5' direction.. It carries out the reaction ATP + H2O = ADP + phosphate + H(+). Its function is as follows. The heterodimer acts as both an ATP-dependent DNA helicase and an ATP-dependent, dual-direction single-stranded exonuclease. Recognizes the chi site generating a DNA molecule suitable for the initiation of homologous recombination. The AddA nuclease domain is required for chi fragment generation; this subunit has the helicase and 3' -&gt; 5' nuclease activities. This chain is ATP-dependent helicase/nuclease subunit A, found in Streptococcus pyogenes serotype M28 (strain MGAS6180).